The sequence spans 451 residues: Subtilase-type proteinase psp3 (451 aa).

Residues Met-1–Ala-20 form the signal peptide. Residues Tyr-80–Val-161 form the Inhibitor I9 domain. A Peptidase S8 domain is found at Pro-169–Glu-451. Residues Asp-205, His-237, and Ser-394 each act as charge relay system in the active site.

It belongs to the peptidase S8 family.

The sequence is that of Subtilase-type proteinase psp3 (psp3) from Schizosaccharomyces pombe (strain 972 / ATCC 24843) (Fission yeast).